Reading from the N-terminus, the 110-residue chain is METIAKHRYANSSAQKLRLVINLIRGKEVSKALEILTYTNKKAANLVKKVLESAIANAEHNDGADVDDLKIAKIFVDVGPSIKRIMPRAKGRVDHILKRTSHITVVVSDR.

The protein belongs to the universal ribosomal protein uL22 family. In terms of assembly, part of the 50S ribosomal subunit.

Functionally, this protein binds specifically to 23S rRNA; its binding is stimulated by other ribosomal proteins, e.g. L4, L17, and L20. It is important during the early stages of 50S assembly. It makes multiple contacts with different domains of the 23S rRNA in the assembled 50S subunit and ribosome. In terms of biological role, the globular domain of the protein is located near the polypeptide exit tunnel on the outside of the subunit, while an extended beta-hairpin is found that lines the wall of the exit tunnel in the center of the 70S ribosome. This chain is Large ribosomal subunit protein uL22, found in Baumannia cicadellinicola subsp. Homalodisca coagulata.